A 660-amino-acid chain; its full sequence is Bifunctional polymyxin resistance protein ArnA (660 aa).

Positions 1-304 are formyltransferase ArnAFT; that stretch reads MKAVIFAYHD…ALGLVKGALL (304 aa). Residue His-104 is the Proton donor; for formyltransferase activity of the active site. (6R)-10-formyltetrahydrofolate contacts are provided by residues Arg-114 and 136–140; that span reads TARAD. A dehydrogenase ArnADH region spans residues 314-660; sequence RRTRVLILGV…QTVDLPDAAQ (347 aa). NAD(+) is bound by residues Asp-347 and 368–369; that span reads DI. UDP-alpha-D-glucuronate-binding positions include Ala-393, Tyr-398, and 432-433; that span reads TS. The active-site Proton acceptor; for decarboxylase activity is the Glu-434. UDP-alpha-D-glucuronate-binding positions include Arg-460, Asn-492, 526-535, and Tyr-613; that span reads KLVDGGAQKR. The active-site Proton donor; for decarboxylase activity is the Arg-619.

This sequence in the N-terminal section; belongs to the Fmt family. UDP-L-Ara4N formyltransferase subfamily. In the C-terminal section; belongs to the NAD(P)-dependent epimerase/dehydratase family. UDP-glucuronic acid decarboxylase subfamily. In terms of assembly, homohexamer, formed by a dimer of trimers.

It catalyses the reaction UDP-alpha-D-glucuronate + NAD(+) = UDP-beta-L-threo-pentopyranos-4-ulose + CO2 + NADH. It carries out the reaction UDP-4-amino-4-deoxy-beta-L-arabinose + (6R)-10-formyltetrahydrofolate = UDP-4-deoxy-4-formamido-beta-L-arabinose + (6S)-5,6,7,8-tetrahydrofolate + H(+). It participates in nucleotide-sugar biosynthesis; UDP-4-deoxy-4-formamido-beta-L-arabinose biosynthesis; UDP-4-deoxy-4-formamido-beta-L-arabinose from UDP-alpha-D-glucuronate: step 1/3. Its pathway is nucleotide-sugar biosynthesis; UDP-4-deoxy-4-formamido-beta-L-arabinose biosynthesis; UDP-4-deoxy-4-formamido-beta-L-arabinose from UDP-alpha-D-glucuronate: step 3/3. The protein operates within bacterial outer membrane biogenesis; lipopolysaccharide biosynthesis. Bifunctional enzyme that catalyzes the oxidative decarboxylation of UDP-glucuronic acid (UDP-GlcUA) to UDP-4-keto-arabinose (UDP-Ara4O) and the addition of a formyl group to UDP-4-amino-4-deoxy-L-arabinose (UDP-L-Ara4N) to form UDP-L-4-formamido-arabinose (UDP-L-Ara4FN). The modified arabinose is attached to lipid A and is required for resistance to polymyxin and cationic antimicrobial peptides. In Sodalis glossinidius (strain morsitans), this protein is Bifunctional polymyxin resistance protein ArnA.